Consider the following 649-residue polypeptide: Centrosomal protein of 63 kDa-A (649 aa).

2 coiled-coil regions span residues 19–185 and 222–556; these read DSCE…YQHQ and EEEL…DAAS. S560 is modified (phosphoserine; by atm and atr). The stretch at 612–645 forms a coiled coil; the sequence is FLQEEEQRSHELLQRLNAHIEELKQESQRTVEHF.

This sequence belongs to the CEP63 family. Post-translationally, phosphorylation at Ser-560 by atm and atr promotes its delocalization from the centrosome and impairs its ability to promote centrosome dependent spindle assembly.

It is found in the cytoplasm. The protein resides in the cytoskeleton. It localises to the microtubule organizing center. Its subcellular location is the centrosome. The protein localises to the centriole. Its function is as follows. Required for normal spindle assembly. Plays a key role in mother-centriole-dependent centriole duplication. Plays a role in DNA damage response. Following DNA damage, such as double-strand breaks (DSBs), is removed from centrosomes; this leads to the inactivation of spindle assembly and delay in mitotic progression. The chain is Centrosomal protein of 63 kDa-A (cep63-a) from Xenopus laevis (African clawed frog).